Here is a 484-residue protein sequence, read N- to C-terminus: Ribosomal RNA small subunit methyltransferase F (484 aa).

S-adenosyl-L-methionine contacts are provided by residues 126 to 132 (AAAPGSK), Glu-150, Asp-177, and Asp-195. Catalysis depends on Cys-248, which acts as the Nucleophile.

It belongs to the class I-like SAM-binding methyltransferase superfamily. RsmB/NOP family.

It localises to the cytoplasm. The catalysed reaction is cytidine(1407) in 16S rRNA + S-adenosyl-L-methionine = 5-methylcytidine(1407) in 16S rRNA + S-adenosyl-L-homocysteine + H(+). Specifically methylates the cytosine at position 1407 (m5C1407) of 16S rRNA. The sequence is that of Ribosomal RNA small subunit methyltransferase F from Pectobacterium atrosepticum (strain SCRI 1043 / ATCC BAA-672) (Erwinia carotovora subsp. atroseptica).